The sequence spans 133 residues: ATP synthase epsilon chain, chloroplastic (133 aa).

Belongs to the ATPase epsilon chain family. As to quaternary structure, F-type ATPases have 2 components, CF(1) - the catalytic core - and CF(0) - the membrane proton channel. CF(1) has five subunits: alpha(3), beta(3), gamma(1), delta(1), epsilon(1). CF(0) has three main subunits: a, b and c.

It is found in the plastid. It localises to the chloroplast thylakoid membrane. Produces ATP from ADP in the presence of a proton gradient across the membrane. This is ATP synthase epsilon chain, chloroplastic from Piper cenocladum (Ant piper).